Here is a 177-residue protein sequence, read N- to C-terminus: Large ribosomal subunit protein uL22 (177 aa).

The disordered stretch occupies residues 118 to 177 (VESRPSREGRRGGAGESAGGARARRAQGSKAAAAKKAPASSSTKAATTTEASEEAKGGSQ). The span at 121 to 130 (RPSREGRRGG) shows a compositional bias: basic and acidic residues. Positions 145–167 (GSKAAAAKKAPASSSTKAATTTE) are enriched in low complexity.

It belongs to the universal ribosomal protein uL22 family. In terms of assembly, part of the 50S ribosomal subunit.

Functionally, this protein binds specifically to 23S rRNA; its binding is stimulated by other ribosomal proteins, e.g. L4, L17, and L20. It is important during the early stages of 50S assembly. It makes multiple contacts with different domains of the 23S rRNA in the assembled 50S subunit and ribosome. In terms of biological role, the globular domain of the protein is located near the polypeptide exit tunnel on the outside of the subunit, while an extended beta-hairpin is found that lines the wall of the exit tunnel in the center of the 70S ribosome. The protein is Large ribosomal subunit protein uL22 of Mycobacterium sp. (strain JLS).